The chain runs to 74 residues: High-potential iron-sulfur protein (74 aa).

[4Fe-4S] cluster-binding residues include cysteine 36, cysteine 39, cysteine 53, and cysteine 67.

Belongs to the high-potential iron-sulfur protein (HiPIP) family. As to quaternary structure, homodimer.

In terms of biological role, specific class of high-redox-potential 4Fe-4S ferredoxins. Functions in anaerobic electron transport in most purple and in some other photosynthetic bacteria and in at least one genus (Paracoccus) of halophilic, denitrifying bacteria. This Rubrivivax gelatinosus (Rhodocyclus gelatinosus) protein is High-potential iron-sulfur protein (hip).